Here is a 309-residue protein sequence, read N- to C-terminus: Homoserine kinase (309 aa).

ATP is bound at residue 91–101 (PIGSGLGSSAC).

The protein belongs to the GHMP kinase family. Homoserine kinase subfamily.

The protein resides in the cytoplasm. It carries out the reaction L-homoserine + ATP = O-phospho-L-homoserine + ADP + H(+). The protein operates within amino-acid biosynthesis; L-threonine biosynthesis; L-threonine from L-aspartate: step 4/5. Functionally, catalyzes the ATP-dependent phosphorylation of L-homoserine to L-homoserine phosphate. The polypeptide is Homoserine kinase (Pectobacterium carotovorum subsp. carotovorum (strain PC1)).